The sequence spans 287 residues: MKNPIKWAIIAVLLSTVVAKKIVGEGMADVSAIKHPEEVHPTNRDFLRSLIFSISMIFGCEIGDKTFIVAALLAFENSRLTVFAGSYSALFIMTLLGVLLGHAAPLLFPRKLTDILGGVLFVIFGIKMLMEAKEVMDSKESMSDEFQNVRNEIAANGPIDQLLEEGAAPSHYTGHRSRSGHTLMSQLKSKGRNVMATLFSPLFIKAFALTFVSEWGDRSQIATIAMAASDNVYGVFMGANVGHACCTALAVISGKYISTKIKVHKVMFIGGILFIAFGLVYFYQGFF.

7 helical membrane passes run 7 to 27 (WAIIAVLLSTVVAKKIVGEGM), 50 to 70 (LIFSISMIFGCEIGDKTFIVA), 89 to 109 (ALFIMTLLGVLLGHAAPLLFP), 112 to 132 (LTDILGGVLFVIFGIKMLMEA), 194 to 214 (VMATLFSPLFIKAFALTFVSE), 232 to 252 (VYGVFMGANVGHACCTALAVI), and 267 to 287 (MFIGGILFIAFGLVYFYQGFF).

Belongs to the GDT1 family.

It localises to the membrane. This chain is GDT1-like protein C17G8.08c, found in Schizosaccharomyces pombe (strain 972 / ATCC 24843) (Fission yeast).